A 205-amino-acid polypeptide reads, in one-letter code: High frequency lysogenization protein HflD homolog (205 aa).

The protein belongs to the HflD family.

The protein resides in the cytoplasm. It localises to the cell inner membrane. The sequence is that of High frequency lysogenization protein HflD homolog from Haemophilus influenzae (strain PittEE).